The primary structure comprises 124 residues: UPF0102 protein BL0935 (124 aa).

It belongs to the UPF0102 family.

This chain is UPF0102 protein BL0935, found in Bifidobacterium longum (strain NCC 2705).